The sequence spans 341 residues: Phosphoribosylaminoimidazole-succinocarboxamide synthase, chloroplastic (341 aa).

It belongs to the SAICAR synthetase family.

Its subcellular location is the plastid. It is found in the chloroplast. It carries out the reaction 5-amino-1-(5-phospho-D-ribosyl)imidazole-4-carboxylate + L-aspartate + ATP = (2S)-2-[5-amino-1-(5-phospho-beta-D-ribosyl)imidazole-4-carboxamido]succinate + ADP + phosphate + 2 H(+). It participates in purine metabolism; IMP biosynthesis via de novo pathway; 5-amino-1-(5-phospho-D-ribosyl)imidazole-4-carboxamide from 5-amino-1-(5-phospho-D-ribosyl)imidazole-4-carboxylate: step 1/2. The polypeptide is Phosphoribosylaminoimidazole-succinocarboxamide synthase, chloroplastic (PUR7) (Vigna aconitifolia (Moth bean)).